We begin with the raw amino-acid sequence, 2172 residues long: DExH-box ATP-dependent RNA helicase DExH13 (2172 aa).

The disordered stretch occupies residues 20-83 (YKVNSSLVLN…KSKKKKERCD (64 aa)). The span at 30 to 73 (SDERRRDTHESSGEPESLRGRIDPKSFGDRVVRGRPHELDERLN) shows a compositional bias: basic and acidic residues. Positions 515–698 (GTALFKADNI…FLRVDLKNGL (184 aa)) constitute a Helicase ATP-binding 1 domain. Residue 528 to 535 (APTGAGKT) participates in ATP binding. The DEIH box motif lies at 640–643 (DEIH). A Helicase C-terminal 1 domain is found at 742-946 (GKHQVLIFVH…NAREACHWLG (205 aa)). One can recognise an SEC63 1 domain in the interval 1007–1308 (TDLGRIASYY…KWLDSPTVLP (302 aa)). The 178-residue stretch at 1361–1538 (TVLYNTSDNV…WIGASSCGVF (178 aa)) folds into the Helicase ATP-binding 2 domain. 1374-1381 (APTGSGKT) contributes to the ATP binding site. The DELH box motif lies at 1480–1483 (DELH). The region spanning 1575-1772 (AIVQHAKNKK…NFNAEVVARV (198 aa)) is the Helicase C-terminal 2 domain. One can recognise an SEC63 2 domain in the interval 1840-2157 (PLNLGMIASY…YLGCDQEYSF (318 aa)).

Its subcellular location is the nucleus. The catalysed reaction is ATP + H2O = ADP + phosphate + H(+). In terms of biological role, RNA helicase that plays an essential role in pre-mRNA splicing as component of the U5 snRNP and U4/U6-U5 tri-snRNP complexes. Involved in spliceosome assembly, activation and disassembly. In Arabidopsis thaliana (Mouse-ear cress), this protein is DExH-box ATP-dependent RNA helicase DExH13.